Consider the following 98-residue polypeptide: NADH-ubiquinone oxidoreductase chain 4L (98 aa).

3 helical membrane-spanning segments follow: residues 2–22 (PSIFINIILAFIIALLGMLIF), 37–57 (MLSMFILSTLTILSLHLTMSF), and 61–81 (ILLLVFAACEAAVGLALLVTV).

This sequence belongs to the complex I subunit 4L family. As to quaternary structure, core subunit of respiratory chain NADH dehydrogenase (Complex I) which is composed of 45 different subunits.

The protein localises to the mitochondrion inner membrane. It carries out the reaction a ubiquinone + NADH + 5 H(+)(in) = a ubiquinol + NAD(+) + 4 H(+)(out). In terms of biological role, core subunit of the mitochondrial membrane respiratory chain NADH dehydrogenase (Complex I) which catalyzes electron transfer from NADH through the respiratory chain, using ubiquinone as an electron acceptor. Part of the enzyme membrane arm which is embedded in the lipid bilayer and involved in proton translocation. In Varecia rubra (Red ruffed lemur), this protein is NADH-ubiquinone oxidoreductase chain 4L (MT-ND4L).